Reading from the N-terminus, the 2211-residue chain is Orsellinic acid synthase (2211 aa).

Positions 44-246 (TFREQVSDAI…TVAVVHSLYH (203 aa)) are N-terminal acylcarrier protein transacylase domain (SAT). Residues 380–805 (WDDIAIVGMA…GSNAAVIIGE (426 aa)) enclose the Ketosynthase family 3 (KS3) domain. Residues C549, H684, and H724 each act as for beta-ketoacyl synthase activity in the active site. The malonyl-CoA:ACP transacylase (MAT) domain stretch occupies residues 910–1228 (VFIFSGQGSQ…QLTTLKKNVP (319 aa)). Catalysis depends on S1006, which acts as the For acyl/malonyl transferase activity. The N-terminal hotdog fold stretch occupies residues 1309–1440 (HAIQKLSHGA…GVVKQSNMAS (132 aa)). A PKS/mFAS DH domain is found at 1309–1629 (HAIQKLSHGA…FQHVKIPLIE (321 aa)). Residues 1334–1573 (EFIEGHLVCG…GATTLRAPVV (240 aa)) form a product template (PT) domain region. Residue H1339 is the Proton acceptor; for dehydratase activity of the active site. The interval 1473–1629 (VQVFSKRAMY…FQHVKIPLIE (157 aa)) is C-terminal hotdog fold. Residue D1537 is the Proton donor; for dehydratase activity of the active site. 2 Carrier domains span residues 1681–1755 (AAPE…EALS) and 1787–1865 (STVD…VKRP). The residue at position 1715 (S1715) is an O-(pantetheine 4'-phosphoryl)serine. The segment at 1755–1786 (SPTPVGNDVDNDSPTPGSERGSDSAISTPASV) is disordered. An O-(pantetheine 4'-phosphoryl)serine modification is found at S1824. Residues 1937–2204 (SGKSPLFLIH…AAVSAALVDA (268 aa)) form a thioesterase (TE) domain region.

The catalysed reaction is 3 malonyl-CoA + acetyl-CoA + 2 H(+) = orsellinate + 3 CO2 + 4 CoA. It participates in secondary metabolite biosynthesis. Functionally, non-reducing polyketide synthase; part of the gene cluster that mediates the biosynthesis of the bibenzoquinone oosporein, a metabolite required for fungal virulence that acts by evading host immunity to facilitate fungal multiplication in insects. The non-reducing polyketide synthase OpS1 produces orsellinic acid by condensing acetyl-CoA with 3 malonyl-CoA units. Orsellinic acid is then hydroxylated to benzenetriol by the hydroxylase OpS4. The intermediate is oxidized either nonenzymatically to 5,5'-dideoxy-oosporein or enzymatically to benzenetetrol by the oxidoreductase OpS7. The latter is further dimerized to oosporein by the catalase OpS5. OpS6 probably functions en route for protecting cells against oxidative stress by scavenging any leaked free radical form of benzenetetrol by activating the thiol group of glutathione. This is Orsellinic acid synthase from Beauveria bassiana (strain ARSEF 2860) (White muscardine disease fungus).